We begin with the raw amino-acid sequence, 250 residues long: 1-(5-phosphoribosyl)-5-[(5-phosphoribosylamino)methylideneamino] imidazole-4-carboxamide isomerase (250 aa).

Asp-12 (proton acceptor) is an active-site residue. The active-site Proton donor is Asp-134.

The protein belongs to the HisA/HisF family.

It localises to the cytoplasm. It catalyses the reaction 1-(5-phospho-beta-D-ribosyl)-5-[(5-phospho-beta-D-ribosylamino)methylideneamino]imidazole-4-carboxamide = 5-[(5-phospho-1-deoxy-D-ribulos-1-ylimino)methylamino]-1-(5-phospho-beta-D-ribosyl)imidazole-4-carboxamide. Its pathway is amino-acid biosynthesis; L-histidine biosynthesis; L-histidine from 5-phospho-alpha-D-ribose 1-diphosphate: step 4/9. The protein is 1-(5-phosphoribosyl)-5-[(5-phosphoribosylamino)methylideneamino] imidazole-4-carboxamide isomerase of Actinobacillus pleuropneumoniae serotype 5b (strain L20).